A 207-amino-acid polypeptide reads, in one-letter code: NAD(P)H-quinone oxidoreductase subunit K, chloroplastic (207 aa).

Cys-47, Cys-48, Cys-112, and Cys-143 together coordinate [4Fe-4S] cluster.

It belongs to the complex I 20 kDa subunit family. As to quaternary structure, NDH is composed of at least 16 different subunits, 5 of which are encoded in the nucleus. [4Fe-4S] cluster is required as a cofactor.

Its subcellular location is the plastid. The protein resides in the chloroplast thylakoid membrane. The enzyme catalyses a plastoquinone + NADH + (n+1) H(+)(in) = a plastoquinol + NAD(+) + n H(+)(out). The catalysed reaction is a plastoquinone + NADPH + (n+1) H(+)(in) = a plastoquinol + NADP(+) + n H(+)(out). Its function is as follows. NDH shuttles electrons from NAD(P)H:plastoquinone, via FMN and iron-sulfur (Fe-S) centers, to quinones in the photosynthetic chain and possibly in a chloroplast respiratory chain. The immediate electron acceptor for the enzyme in this species is believed to be plastoquinone. Couples the redox reaction to proton translocation, and thus conserves the redox energy in a proton gradient. The polypeptide is NAD(P)H-quinone oxidoreductase subunit K, chloroplastic (Psilotum nudum (Whisk fern)).